The primary structure comprises 144 residues: HMG1/2-like protein (144 aa).

Disordered regions lie at residues 1 to 42 and 85 to 144; these read MKGG…PPSA and PFIS…EDDD. Composition is skewed to basic and acidic residues over residues 8–35 and 89–99; these read AKSD…DPNK and KAEKRKQEYEK. The segment at residues 36 to 105 is a DNA-binding region (HMG box); that stretch reads PKRPPSAFFV…EYEKNLQAYN (70 aa). Positions 126–144 are enriched in acidic residues; that stretch reads NDDDEDQDGSGEDDSEDDD.

It belongs to the HMGB family. Expressed at higher levels in dark-grown tissues, such as roots; and at lower levels in light-grown tissues, such as cotyledons and stems.

The protein localises to the nucleus. The protein is HMG1/2-like protein of Ipomoea nil (Japanese morning glory).